Here is a 90-residue protein sequence, read N- to C-terminus: Elongation factor 1-beta (90 aa).

The protein belongs to the EF-1-beta/EF-1-delta family.

Promotes the exchange of GDP for GTP in EF-1-alpha/GDP, thus allowing the regeneration of EF-1-alpha/GTP that could then be used to form the ternary complex EF-1-alpha/GTP/AAtRNA. The chain is Elongation factor 1-beta from Staphylothermus marinus (strain ATCC 43588 / DSM 3639 / JCM 9404 / F1).